The chain runs to 164 residues: Large ribosomal subunit protein bL9 (164 aa).

This sequence belongs to the bacterial ribosomal protein bL9 family.

Its function is as follows. Binds to the 23S rRNA. This chain is Large ribosomal subunit protein bL9, found in Psychrobacter sp. (strain PRwf-1).